The following is a 185-amino-acid chain: MQSLENHFLIAMPSMQDPFFKRAVTYICEHNEDGAMGLVINQPINITVGELLDKIEIDNDKTQQAAQVSVYAGGPVKTDRGFVLHSPKHGYSASQALSSDIMITTSKDVLASLTTAQAPEQFIITLGYSGWEQGQLEQELLDNSWLIIKADPKIIFDTPVEKRWEKAVSMLGFDISQLSPEAGHA.

The protein belongs to the UPF0301 (AlgH) family.

In Pseudoalteromonas translucida (strain TAC 125), this protein is UPF0301 protein PSHAa2600.